A 572-amino-acid chain; its full sequence is Sulfate adenylyltransferase (572 aa).

The N-terminal stretch occupies residues 1 to 169; the sequence is MANTPHGGVL…IQAINKLNHY (169 aa). The interval 170–394 is catalytic; sequence DYVGLRYTPA…LRESHPPRAK (225 aa). Gln197 lines the sulfate pocket. Residues 197–200 and 291–294 each bind ATP; these read QTRN and GRDH. Residues Thr198, Arg199, and Asn200 contribute to the active site. Arg199 contributes to the sulfate binding site. Ala295 is a binding site for sulfate. An ATP-binding site is contributed by Met333. Positions 395–572 are allosteric regulation domain; adenylyl-sulfate kinase-like; it reads QGFTIFLTGH…LLESQGFFGN (178 aa). Residues 434–437, Arg451, 477–478, and Lys515 each bind 3'-phosphoadenylyl sulfate; these read ETVR and IA.

In the N-terminal section; belongs to the sulfate adenylyltransferase family. It in the C-terminal section; belongs to the APS kinase family. Homohexamer. Dimer of trimers.

It is found in the cytoplasm. It carries out the reaction sulfate + ATP + H(+) = adenosine 5'-phosphosulfate + diphosphate. It functions in the pathway sulfur metabolism; hydrogen sulfide biosynthesis; sulfite from sulfate: step 1/3. With respect to regulation, allosterically inhibited by 3'-phosphoadenosine 5'-phosphosulfate (PAPS). Its function is as follows. Catalyzes the first intracellular reaction of sulfate assimilation, forming adenosine-5'-phosphosulfate (APS) from inorganic sulfate and ATP. Plays an important role in sulfate activation as a component of the biosynthesis pathway of sulfur-containing amino acids. This Yarrowia lipolytica (strain CLIB 122 / E 150) (Yeast) protein is Sulfate adenylyltransferase.